Consider the following 399-residue polypeptide: Lysosomal acid lipase/cholesteryl ester hydrolase (399 aa).

A signal peptide spans Met1–Thr27. The propeptide at Ala28–Lys76 is removed in mature form. N-linked (GlcNAc...) asparagine glycans are attached at residues Asn36, Asn72, Asn101, and Asn161. The 301-residue stretch at Pro80–Gly380 folds into the AB hydrolase-1 domain. The Charge relay system role is filled by Ser174. Asn273 and Asn321 each carry an N-linked (GlcNAc...) asparagine glycan. Residue His374 is the Charge relay system of the active site.

This sequence belongs to the AB hydrolase superfamily. Lipase family. Monomer. Glycosylation is not essential for catalytic activity.

It localises to the lysosome. The catalysed reaction is a sterol ester + H2O = a sterol + a fatty acid + H(+). It carries out the reaction cholesteryl (9Z-octadecenoate) + H2O = cholesterol + (9Z)-octadecenoate + H(+). It catalyses the reaction a triacylglycerol + H2O = a 1,2-diacylglycerol + a fatty acid + H(+). The enzyme catalyses 1,2-di-(9Z-octadecenoyl)-glycerol + (9Z)-octadecenoate + H(+) = 1,2,3-tri-(9Z-octadecenoyl)-glycerol + H2O. The catalysed reaction is a 1,2-diacylglycerol + H2O = a 1-acylglycerol + a fatty acid + H(+). It carries out the reaction 1,2-di-(9Z-octadecenoyl)-glycerol + H2O = 1-(9Z-octadecenoyl)-glycerol + (9Z)-octadecenoate + H(+). It catalyses the reaction a 1,3-diacylglycerol + H2O = a 1-acylglycerol + a fatty acid + H(+). The enzyme catalyses 1,3-di-(9Z-octadecenoyl)-glycerol + H2O = 1-(9Z-octadecenoyl)-glycerol + (9Z)-octadecenoate + H(+). In terms of biological role, catalyzes the deacylation of cholesteryl ester core lipids of endocytosed low density lipoproteins to generate free fatty acids and cholesterol. Hydrolyzes triglycerides (1,2,3-triacylglycerol) and diglycerides (such as 1,2-diacylglycerol and 1,3-diacylglycerol) with preference for the acyl moieties at the sn-1 or sn-3 positions. The chain is Lysosomal acid lipase/cholesteryl ester hydrolase (LIPA) from Macaca fascicularis (Crab-eating macaque).